The chain runs to 126 residues: MNIIQQYEADEIARLSAAREVPEFGPGDTVRVSVRVVEGERKRIQAYEGVVIARSNKGLNSNFTVRKISNGEGVERVFPLYAPTIAEIKVVRRGAVRRAKLYYLRGRRGKSARIAERARETVSAEA.

This sequence belongs to the bacterial ribosomal protein bL19 family.

This protein is located at the 30S-50S ribosomal subunit interface and may play a role in the structure and function of the aminoacyl-tRNA binding site. This Gluconacetobacter diazotrophicus (strain ATCC 49037 / DSM 5601 / CCUG 37298 / CIP 103539 / LMG 7603 / PAl5) protein is Large ribosomal subunit protein bL19.